The primary structure comprises 205 residues: CASP-like protein 0U1 (205 aa).

Residues methionine 1–phenylalanine 66 lie on the Cytoplasmic side of the membrane. Residues alanine 10–arginine 162 form the MARVEL domain. The chain crosses the membrane as a helical span at residues leucine 67–isoleucine 87. Topologically, residues glutamine 88–valine 90 are extracellular. A helical transmembrane segment spans residues proline 91–phenylalanine 111. Topologically, residues serine 112–lysine 137 are cytoplasmic. A helical membrane pass occupies residues alanine 138–tryptophan 158. Topologically, residues lysine 159–glutamate 167 are extracellular. A helical membrane pass occupies residues glycine 168–glycine 188. Residues glycine 189–alanine 205 are Cytoplasmic-facing.

It belongs to the Casparian strip membrane proteins (CASP) family. As to quaternary structure, homodimer and heterodimers.

It is found in the cell membrane. The protein is CASP-like protein 0U1 of Micromonas pusilla (strain CCMP1545) (Picoplanktonic green alga).